The following is a 382-amino-acid chain: Fimbrial usher domain-containing protein YdeT (382 aa).

This is Fimbrial usher domain-containing protein YdeT (ydeT) from Escherichia coli (strain K12).